The primary structure comprises 371 residues: Queuine tRNA-ribosyltransferase (371 aa).

The Proton acceptor role is filled by aspartate 89. Residues 89–93 (DSGGF), aspartate 143, glutamine 185, and glycine 212 contribute to the substrate site. The interval 243–249 (GVGKPED) is RNA binding. Residue aspartate 262 is the Nucleophile of the active site. Positions 267-271 (TRNAR) are RNA binding; important for wobble base 34 recognition. Zn(2+) contacts are provided by cysteine 300, cysteine 302, cysteine 305, and histidine 331.

It belongs to the queuine tRNA-ribosyltransferase family. In terms of assembly, homodimer. Within each dimer, one monomer is responsible for RNA recognition and catalysis, while the other monomer binds to the replacement base PreQ1. It depends on Zn(2+) as a cofactor.

The catalysed reaction is 7-aminomethyl-7-carbaguanine + guanosine(34) in tRNA = 7-aminomethyl-7-carbaguanosine(34) in tRNA + guanine. It participates in tRNA modification; tRNA-queuosine biosynthesis. Its function is as follows. Catalyzes the base-exchange of a guanine (G) residue with the queuine precursor 7-aminomethyl-7-deazaguanine (PreQ1) at position 34 (anticodon wobble position) in tRNAs with GU(N) anticodons (tRNA-Asp, -Asn, -His and -Tyr). Catalysis occurs through a double-displacement mechanism. The nucleophile active site attacks the C1' of nucleotide 34 to detach the guanine base from the RNA, forming a covalent enzyme-RNA intermediate. The proton acceptor active site deprotonates the incoming PreQ1, allowing a nucleophilic attack on the C1' of the ribose to form the product. After dissociation, two additional enzymatic reactions on the tRNA convert PreQ1 to queuine (Q), resulting in the hypermodified nucleoside queuosine (7-(((4,5-cis-dihydroxy-2-cyclopenten-1-yl)amino)methyl)-7-deazaguanosine). This chain is Queuine tRNA-ribosyltransferase, found in Thioalkalivibrio sulfidiphilus (strain HL-EbGR7).